We begin with the raw amino-acid sequence, 101 residues long: Small ribosomal subunit protein uS14 (101 aa).

The protein belongs to the universal ribosomal protein uS14 family. In terms of assembly, part of the 30S ribosomal subunit. Contacts proteins S3 and S10.

Functionally, binds 16S rRNA, required for the assembly of 30S particles and may also be responsible for determining the conformation of the 16S rRNA at the A site. The chain is Small ribosomal subunit protein uS14 from Pseudomonas putida (strain ATCC 47054 / DSM 6125 / CFBP 8728 / NCIMB 11950 / KT2440).